The following is a 392-amino-acid chain: Odorant receptor 85f (392 aa).

Residues 1–36 (MEPVQYSYEDFARLPTTVFWIMGYDMLGVPKTRSRR) are Cytoplasmic-facing. The chain crosses the membrane as a helical span at residues 37 to 57 (ILYWIYRFLCLASHGVCVGVM). Over 58–69 (VFRMVEAKTIDN) the chain is Extracellular. A glycan (N-linked (GlcNAc...) asparagine) is linked at N69. Residues 70–90 (VSLIMRYATLVTYIINSDTKF) traverse the membrane as a helical segment. At 91–130 (ATVLQRSAIQSLNSKLAELYPKTTLDRIYHRVNDHYWTKS) the chain is on the cytoplasmic side. Residues 131 to 151 (FVYLVIIYIGSSIMVVIGPII) traverse the membrane as a helical segment. The Extracellular portion of the chain corresponds to 152 to 179 (TSIIAYFTHNVFTYMHCYPYFLYDPEKD). A helical membrane pass occupies residues 180 to 200 (PVWIYISIYALEWLHSTQMVI). Over 201–268 (SNIGADIWLL…NDLNGIFGKS (68 aa)) the chain is Cytoplasmic. The helical transmembrane segment at 269 to 289 (LLLSLLTTAAVICTVAVYTLI) threads the bilayer. The Extracellular segment spans residues 290–295 (QGPTLE). The chain crosses the membrane as a helical span at residues 296–316 (GFTYVIFIGTSVMQVYLVCYY). Topologically, residues 317–363 (GQQVLDLSGEVAHAVYNHDFHDASIAYKRYLLIIIIRAQQPVELNAM) are cytoplasmic. The helical transmembrane segment at 364–384 (GYLSISLDTFKQLMSVSYRVI) threads the bilayer. Residues 385–392 (TMLMQMIQ) lie on the Extracellular side of the membrane.

The protein belongs to the insect chemoreceptor superfamily. Heteromeric odorant receptor channel (TC 1.A.69) family. Or49a subfamily. In terms of assembly, interacts with Orco. Complexes exist early in the endomembrane system in olfactory sensory neurons (OSNs), coupling these complexes to the conserved ciliary trafficking pathway. As to expression, expressed in olfactory sensory neurons in the antenna.

The protein localises to the cell membrane. Odorant receptor which mediates acceptance or avoidance behavior, depending on its substrates. The odorant receptor repertoire encodes a large collection of odor stimuli that vary widely in identity, intensity, and duration. May form a complex with Orco to form odorant-sensing units, providing sensitive and prolonged odorant signaling and calcium permeability. The chain is Odorant receptor 85f (Or85f) from Drosophila melanogaster (Fruit fly).